The following is a 64-amino-acid chain: Large ribosomal subunit protein bL35 (64 aa).

It belongs to the bacterial ribosomal protein bL35 family.

In Shewanella oneidensis (strain ATCC 700550 / JCM 31522 / CIP 106686 / LMG 19005 / NCIMB 14063 / MR-1), this protein is Large ribosomal subunit protein bL35.